Consider the following 144-residue polypeptide: MNAYEAYMNELATQMRSELTGRDFKSLETADEVSNFMTNVGSDDTTFVVINSTCGCAAGLARPAAVTVVEQNDKKPTNKVTVFAGQDKEATATMRDYIQQVPSSPSYALFKGQELKHFIPREHIEGRDIQDICMDIKDAFDDYC.

Belongs to the bacilliredoxin family.

This Staphylococcus saprophyticus subsp. saprophyticus (strain ATCC 15305 / DSM 20229 / NCIMB 8711 / NCTC 7292 / S-41) protein is Bacilliredoxin SSP1311.